The primary structure comprises 93 residues: Small ribosomal subunit protein uS19 (93 aa).

It belongs to the universal ribosomal protein uS19 family.

In terms of biological role, protein S19 forms a complex with S13 that binds strongly to the 16S ribosomal RNA. The sequence is that of Small ribosomal subunit protein uS19 from Renibacterium salmoninarum (strain ATCC 33209 / DSM 20767 / JCM 11484 / NBRC 15589 / NCIMB 2235).